Consider the following 299-residue polypeptide: ATP phosphoribosyltransferase (299 aa).

This sequence belongs to the ATP phosphoribosyltransferase family. Long subfamily. As to quaternary structure, equilibrium between an active dimeric form, an inactive hexameric form and higher aggregates. Interconversion between the various forms is largely reversible and is influenced by the natural substrates and inhibitors of the enzyme. It depends on Mg(2+) as a cofactor.

Its subcellular location is the cytoplasm. It catalyses the reaction 1-(5-phospho-beta-D-ribosyl)-ATP + diphosphate = 5-phospho-alpha-D-ribose 1-diphosphate + ATP. It functions in the pathway amino-acid biosynthesis; L-histidine biosynthesis; L-histidine from 5-phospho-alpha-D-ribose 1-diphosphate: step 1/9. With respect to regulation, feedback inhibited by histidine. In terms of biological role, catalyzes the condensation of ATP and 5-phosphoribose 1-diphosphate to form N'-(5'-phosphoribosyl)-ATP (PR-ATP). Has a crucial role in the pathway because the rate of histidine biosynthesis seems to be controlled primarily by regulation of HisG enzymatic activity. This is ATP phosphoribosyltransferase from Yersinia pseudotuberculosis serotype O:1b (strain IP 31758).